The following is a 255-amino-acid chain: Malonyl-[acyl-carrier protein] O-methyltransferase (255 aa).

This sequence belongs to the methyltransferase superfamily.

It catalyses the reaction malonyl-[ACP] + S-adenosyl-L-methionine = malonyl-[ACP] methyl ester + S-adenosyl-L-homocysteine. It participates in cofactor biosynthesis; biotin biosynthesis. In terms of biological role, converts the free carboxyl group of a malonyl-thioester to its methyl ester by transfer of a methyl group from S-adenosyl-L-methionine (SAM). It allows to synthesize pimeloyl-ACP via the fatty acid synthetic pathway. This is Malonyl-[acyl-carrier protein] O-methyltransferase from Acinetobacter baylyi (strain ATCC 33305 / BD413 / ADP1).